The chain runs to 418 residues: UDP-N-acetylglucosamine 1-carboxyvinyltransferase (418 aa).

22 to 23 provides a ligand contact to phosphoenolpyruvate; sequence KN. Arg-91 is a UDP-N-acetyl-alpha-D-glucosamine binding site. Cys-115 serves as the catalytic Proton donor. The residue at position 115 (Cys-115) is a 2-(S-cysteinyl)pyruvic acid O-phosphothioketal. 2 residues coordinate UDP-N-acetyl-alpha-D-glucosamine: Asp-305 and Ile-327.

It belongs to the EPSP synthase family. MurA subfamily.

It is found in the cytoplasm. The catalysed reaction is phosphoenolpyruvate + UDP-N-acetyl-alpha-D-glucosamine = UDP-N-acetyl-3-O-(1-carboxyvinyl)-alpha-D-glucosamine + phosphate. The protein operates within cell wall biogenesis; peptidoglycan biosynthesis. Functionally, cell wall formation. Adds enolpyruvyl to UDP-N-acetylglucosamine. This is UDP-N-acetylglucosamine 1-carboxyvinyltransferase from Aeromonas hydrophila subsp. hydrophila (strain ATCC 7966 / DSM 30187 / BCRC 13018 / CCUG 14551 / JCM 1027 / KCTC 2358 / NCIMB 9240 / NCTC 8049).